Consider the following 101-residue polypeptide: Urease subunit beta (101 aa).

Belongs to the urease beta subunit family. In terms of assembly, heterotrimer of UreA (gamma), UreB (beta) and UreC (alpha) subunits. Three heterotrimers associate to form the active enzyme.

Its subcellular location is the cytoplasm. The catalysed reaction is urea + 2 H2O + H(+) = hydrogencarbonate + 2 NH4(+). It participates in nitrogen metabolism; urea degradation; CO(2) and NH(3) from urea (urease route): step 1/1. This Nostoc punctiforme (strain ATCC 29133 / PCC 73102) protein is Urease subunit beta.